The following is a 1062-amino-acid chain: Histone H3-lysine(4) N-trimethyltransferase ATX1 (1062 aa).

The tract at residues 159–184 (NAFSGNKQNGSSRRKGSSSKNQDKAT) is disordered. The PWWP domain maps to 301–365 (PGDIVWAKLA…VKQAISFIKG (65 aa)). The segment at 401–424 (QLQKGADSVDSDMANSTEEGNSGG) is disordered. The region spanning 441-500 (DFRHIIGDLLIINLGKVVTDSQFFKDENHIWPEGYTAMRKFTSLTDHSASALYKMEVLRD) is the FYR N-terminal domain. Positions 504-586 (KTHPLFIVTA…RPSSHVSMCK (83 aa)) constitute an FYR C-terminal domain. A Phorbol-ester/DAG-type zinc finger spans residues 591 to 647 (RHQNQPTGYRPVRVDWKDLDKCNVCHMDEEYENNLFLQCDKCRMMVHAKCYGELEPC). Residues 599-1062 (YRPVRVDWKD…RCDLIDWTAE (464 aa)) are interaction with PIP5. Residues 609–660 (LDKCNVCHMDEEYENNLFLQCDKCRMMVHAKCYGELEPCDGALWLCNLCRPG) form a PHD-type 1 zinc finger. The segment at 665 to 698 (PPRCCLCPVVGGAMKPTTDGRWAHLACAIWIPET) adopts a C2HC pre-PHD-type zinc-finger fold. A PHD-type 2 zinc finger spans residues 722 to 785 (LMCTICGVSY…RMLSFCKRHR (64 aa)). The 119-residue stretch at 898 to 1016 (KRLAFGKSGI…KWEELTYDYR (119 aa)) folds into the SET domain. Position 908 (His908) interacts with S-adenosyl-L-methionine. Ser947 carries an O-linked (GlcNAc) serine glycan. S-adenosyl-L-methionine is bound by residues Tyr954 and 977–978 (NH). Residues Cys980, Cys1026, Cys1028, and Cys1033 each coordinate Zn(2+). Residues 1022 to 1038 (ERLSCSCGFPGCRGVVN) form the Post-SET domain.

Belongs to the class V-like SAM-binding methyltransferase superfamily. Histone-lysine methyltransferase family. TRX/MLL subfamily. As to quaternary structure, interacts with PIP5. Interacts with WDR5A. Binds to CLF in the nucleus. Interacts with NRPB1 CTD domain, especially when NRPB1 is phosphorylated on 'Ser-5' of the heptapeptide repeat. Component of a nuclear protein complex containing at least TATA binding proteins (TBPs, e.g. TBP1 and TBP2) and ATX1. Associates with ULT1 for trimethylating 'Lys-4' on histone H3 (H3K4me3) at flower MADS box gene loci. Interacts with SEC. In terms of assembly, interacts with A4/EF1A in the cytoplasm on the nuclear periphery. In terms of processing, activated via O-glycosylation by SEC; this modification triggers FLC locus H3K4me3 histone modification, thus preventing premature flowering. As to expression, strongly expressed in cotyledons, but weak levels in the first true leaves, except at the hydothodes. Ubiquitous with higher levels in dividing tissues, including inflorescence meristem and flower primordia. Expressed also in leaves (especially at hydathodes), in growing inflorescence stems and in the mature flowers. Strongly expressed in young seedlings.

The protein localises to the nucleus. It localises to the cytoplasm. The protein resides in the perinuclear region. It catalyses the reaction L-lysyl(4)-[histone H3] + 3 S-adenosyl-L-methionine = N(6),N(6),N(6)-trimethyl-L-lysyl(4)-[histone H3] + 3 S-adenosyl-L-homocysteine + 3 H(+). The catalysed reaction is L-lysyl-[protein] + 3 S-adenosyl-L-methionine = N(6),N(6),N(6)-trimethyl-L-lysyl-[protein] + 3 S-adenosyl-L-homocysteine + 3 H(+). Binds to the promoter and regulates the transcription of target genes, maintaining them in an active state; at promoters, required for TATA binding proteins (TBPs, e.g. TBP1 and TBP2) and RNA polymerase II (Pol II) recruitment, and, in a subsequent event, is recruited by a phosphorylated form of Pol II to the +300-bp region of transcribed sequences to trimethylates nucleosomes. Histone trimethyltransferase that trimethylates 'Lys-4' of histone H3 (H3K4me3); H3 'Lys-4' methylation represents a specific tag for epigenetic transcriptional activation and is required for efficient elongation of transcription but not for transcription initiation. Methylates only a limited fraction of nucleosomes of target genes (e.g. FLC, NAP, XTH33 and WRKY70). Necessary for WDR5A occupancy at WRKY70 and LTP7 genes. Required to maintain the active state of class A (AP1 and AP2), class B (PI and AP3) and class C (AG, AGAMOUS) floral homeotic genes at early stages of flower development. Together with CLF, modulates AG nucleosome methylation statement. Involved in epigenetic regulation (e.g. H3K4me3) of the floral repressors FLC, FT and SOC1 to prevent the transition from vegetative to reproductive development, independently of the photoperiod; binds the active FLC locus before flowering, but this interaction is released upon the transition to flowering. Regulates floral organ identity and flowering transition. Functions as a receptor for the lipid messenger phosphatidylinositol 5-phosphate (PI5P), which negatively regulates its transcriptional activation activity. Exhibits histone methylase activity and subsequent transcriptional regulation on WRKY70 gene, and, to a lower extent on secondary defense-response targets salicylic acid (SA)-responsive gene PR1 and jasmonic acid (JA)-responsive gene THI2.1. Involved in response to dehydration stress-response in both abscisic acid (ABA)-dependent and ABA-independent pathways; this includes specific genes (e.g. COR15A, ADH1, CBF4, RD29A, RD29B, RD26, ABF3, NCED3 and ABA3) epigenetic regulation (e.g. H3K4me3 and Pol II recruitment) to promote their transcription and influence ABA production. Implicated in stomatal closure regulation. Indirect repressor of XTH genes (XTH33). Necessary for the phosphorylation of Pol II NRPB1 (e.g. Ser5P and Ser2P) at the promoters of target genes, thus regulating both early and late stages of transcription. Controls root growth and architecture by regulating the timing of root development, stem cell niche maintenance (e.g. quiescent center (QC)), and cell patterning during primary and lateral root development. Modulates cell cycle duration, cell production, and the transition from cell proliferation in the root apical meristem (RAM) to cell elongation. In terms of biological role, trimethylates A4/EF1A post-translationally at Lys-396. Required for actin cytoskeleton organization. In Arabidopsis thaliana (Mouse-ear cress), this protein is Histone H3-lysine(4) N-trimethyltransferase ATX1.